Consider the following 740-residue polypeptide: DNA ligase (740 aa).

Residues 1–20 (MGPGLTLSGMTEQSSLFPAP) are disordered. Residues 56–60 (DAEYD), 105–106 (SI), and glutamate 142 contribute to the NAD(+) site. Lysine 144 functions as the N6-AMP-lysine intermediate in the catalytic mechanism. The NAD(+) site is built by arginine 165, glutamate 201, lysine 322, and lysine 346. Zn(2+) is bound by residues cysteine 471, cysteine 474, cysteine 489, and cysteine 495. Residues 654–740 (AATLPLAGMT…RGAPPNAGGG (87 aa)) enclose the BRCT domain.

This sequence belongs to the NAD-dependent DNA ligase family. LigA subfamily. It depends on Mg(2+) as a cofactor. Mn(2+) serves as cofactor.

The enzyme catalyses NAD(+) + (deoxyribonucleotide)n-3'-hydroxyl + 5'-phospho-(deoxyribonucleotide)m = (deoxyribonucleotide)n+m + AMP + beta-nicotinamide D-nucleotide.. Its function is as follows. DNA ligase that catalyzes the formation of phosphodiester linkages between 5'-phosphoryl and 3'-hydroxyl groups in double-stranded DNA using NAD as a coenzyme and as the energy source for the reaction. It is essential for DNA replication and repair of damaged DNA. This is DNA ligase from Acidovorax ebreus (strain TPSY) (Diaphorobacter sp. (strain TPSY)).